The following is a 156-amino-acid chain: Calglandulin (156 aa).

4 consecutive EF-hand domains span residues 8-43 (EQIT…IGIN), 44-79 (PTKR…YHEK), 82-117 (NQDE…AGEP), and 118-153 (LNEH…ESFK). Asp-131, Asp-133, Asp-135, Thr-137, and Glu-142 together coordinate Ca(2+).

This sequence belongs to the calmodulin family. Calglandulin subfamily. In terms of tissue distribution, expressed by the venom gland.

It is found in the cytoplasm. Its function is as follows. May be involved in the cellular control mechanism of the secretion of toxins from the gland into the venom. In Hoplocephalus stephensii (Stephens's banded snake), this protein is Calglandulin.